The following is a 211-amino-acid chain: RNA chaperone ProQ (211 aa).

Positions 112–148 (ERRAVEKANNPKANKKRSVHHSGNKSENKKSAGKKFS) are disordered. Positions 124-134 (ANKKRSVHHSG) are enriched in basic residues.

It belongs to the ProQ family.

It is found in the cytoplasm. Its function is as follows. RNA chaperone with significant RNA binding, RNA strand exchange and RNA duplexing activities. This chain is RNA chaperone ProQ, found in Histophilus somni (strain 2336) (Haemophilus somnus).